Here is a 341-residue protein sequence, read N- to C-terminus: Aromatic amino acid aminotransferase (341 aa).

An N6-(pyridoxal phosphate)lysine modification is found at Lys213.

This sequence belongs to the class-II pyridoxal-phosphate-dependent aminotransferase family. Homodimer. Requires pyridoxal 5'-phosphate as cofactor.

The catalysed reaction is an aromatic L-alpha-amino acid + 2-oxoglutarate = an aromatic oxo-acid + L-glutamate. Aminotransferase that catalyzes the conversion of aromatic amino acids and 2-oxoglutarate into corresponding aromatic oxo acids and L-glutamate. May catalyze the transamination reaction in phenylalanine biosynthesis. This is Aromatic amino acid aminotransferase from Corynebacterium glutamicum (strain ATCC 13032 / DSM 20300 / JCM 1318 / BCRC 11384 / CCUG 27702 / LMG 3730 / NBRC 12168 / NCIMB 10025 / NRRL B-2784 / 534).